Reading from the N-terminus, the 95-residue chain is Co-chaperonin GroES (95 aa).

Belongs to the GroES chaperonin family. Heptamer of 7 subunits arranged in a ring. Interacts with the chaperonin GroEL.

It is found in the cytoplasm. Together with the chaperonin GroEL, plays an essential role in assisting protein folding. The GroEL-GroES system forms a nano-cage that allows encapsulation of the non-native substrate proteins and provides a physical environment optimized to promote and accelerate protein folding. GroES binds to the apical surface of the GroEL ring, thereby capping the opening of the GroEL channel. This is Co-chaperonin GroES from Chlorobaculum parvum (strain DSM 263 / NCIMB 8327) (Chlorobium vibrioforme subsp. thiosulfatophilum).